A 284-amino-acid chain; its full sequence is Tropomyosin Pen a 1.0102 (284 aa).

A disordered region spans residues 1-51 (MDAIKKKMQAMKLEKDNAMDRADTLEQQNKEANNRAEKSEEEVHNLQKRMQ). Positions 1-273 (MDAIKKKMQA…KEKYKSITDE (273 aa)) form a coiled coil. The span at 12–45 (KLEKDNAMDRADTLEQQNKEANNRAEKSEEEVHN) shows a compositional bias: basic and acidic residues. IgE-binding stretches follow at residues 43–57 (VHNL…ENDL), 85–105 (VAAL…SEER), 133–153 (RSLS…EARF), 187–202 (ESKI…VVGN), 247–284 (QKLQ…LSGY), 249–260 (LQKEVDRLEDEL), and 266–281 (KYKS…FSEL).

The protein belongs to the tropomyosin family. Homodimer.

In terms of biological role, tropomyosin, in association with the troponin complex, plays a central role in the calcium dependent regulation of muscle contraction. This chain is Tropomyosin Pen a 1.0102, found in Penaeus aztecus (Brown shrimp).